Here is a 1221-residue protein sequence, read N- to C-terminus: DNA replication helicase (1221 aa).

The Nuclear localization signal motif lies at 692 to 701 (PKCKCYKKIK). An ATP-binding site is contributed by 917-924 (GEPGSGKS). Residues 967–981 (INELKQCSESYFKKH) constitute a DNA-binding region (H-T-H motif).

In terms of assembly, interacts with IE1 and LEF-3.

It is found in the host nucleus. It carries out the reaction ATP + H2O = ADP + phosphate + H(+). In terms of biological role, essential for initiation of viral DNA replication, it may contribute to other functions such as controlling the switch to the late phase and leading to the inhibition of host protein synthesis. Required for late and very late gene expression. The chain is DNA replication helicase (HELI) from Lepidoptera (butterflies and moths).